A 605-amino-acid chain; its full sequence is Protein spinster (605 aa).

Positions 1–94 (MSLKHQKQSY…HPLGEHHHIP (94 aa)) are disordered. The segment covering 27–38 (SSGSSGSSSSEE) has biased composition (low complexity). A compositionally biased stretch (polar residues) spans 55-67 (TTYSSQQLMPSDT). Basic residues predominate over residues 76–85 (RLRPHHHHHH). The chain crosses the membrane as a helical span at residues 115–137 (FTVTVLCFVNLINYMDRFTIAGV). An N-linked (GlcNAc...) asparagine glycan is attached at N149. The next 5 membrane-spanning stretches (helical) occupy residues 153–173 (GLLQ…FGYL), 180–200 (PWIM…GSFM), 203–223 (FGWF…YSTI), 240–260 (MLAL…IVGS), and 271–291 (WALR…LLIK). N319 is a glycosylation site (N-linked (GlcNAc...) asparagine). The next 5 membrane-spanning stretches (helical) occupy residues 329-349 (FTCV…FIYL), 367-387 (FNFG…GSFL), 401-421 (VICA…CLLV), 431-451 (LIFF…DILL), and 465-485 (FQIL…VGAI). N519 carries N-linked (GlcNAc...) asparagine glycosylation. The chain crosses the membrane as a helical span at residues 558–578 (STSFVEVLGGIFFIFTACFII). N-linked (GlcNAc...) asparagine glycosylation is present at N583.

It belongs to the major facilitator superfamily. Spinster (TC 2.A.1.49) family. As to expression, enriched in brain (at protein level).

It is found in the late endosome membrane. Its subcellular location is the lysosome membrane. Probable sphingolipid transporter that plays a central role in endosomes and/or lysosomes storage. Involved in TGF-beta-mediated synaptic growth regulation both pre- and postsynaptically via its function in endosomal storage regulation. Also required during oogenesis by regulating yolk spheres storage. The chain is Protein spinster (spin) from Drosophila melanogaster (Fruit fly).